Here is a 419-residue protein sequence, read N- to C-terminus: ADIPOR-like receptor IZH3 (419 aa).

The disordered stretch occupies residues 1 to 65 (MSHPNTHMPR…GEAGGGRSVL (65 aa)). Residues 1-147 (MSHPNTHMPR…LNAYGWHNET (147 aa)) are Lumenal-facing. A glycan (N-linked (GlcNAc...) asparagine) is linked at Asn145. Residues 148–168 (INIWSHLVGAAVLAYLLCWGW) form a helical membrane-spanning segment. The Cytoplasmic segment spans residues 169 to 184 (PRSDVYRAAQVPRLAK). The chain crosses the membrane as a helical span at residues 185–205 (WAIGAFLACGVKCMASSVAWH). At 206-225 (TFNGTCHLKLRSRFVCVDYT) the chain is on the lumenal side. N-linked (GlcNAc...) asparagine glycosylation occurs at Asn208. Residues 226–246 (GITLLVTASVVTTVAVTLYGL) traverse the membrane as a helical segment. The Cytoplasmic portion of the chain corresponds to 247–249 (SRP). Residues 250–270 (LMYAYMVASIGLGTAAGVMNW) traverse the membrane as a helical segment. Over 271-283 (SPHFDRPEARPLR) the chain is Lumenal. The helical transmembrane segment at 284–304 (IAVYVGLAALGLVSFVHVWMQ) threads the bilayer. Residues 305 to 311 (VRWASAH) are Cytoplasmic-facing. Residues 312–332 (LMAPLVYKSLVWYGIGVVFYA) traverse the membrane as a helical segment. Residues 333 to 377 (TLVPERWRSDVTLDCCSGPVHEAACRQFRDLPPVARKDRQFWSLW) lie on the Lumenal side of the membrane. The helical transmembrane segment at 378-398 (WVDYFCHSHFLWHVFVVLGVV) threads the bilayer. Residues 399–419 (GHYRAVLQMSRIVWLDAGRAF) lie on the Cytoplasmic side of the membrane.

Belongs to the ADIPOR family.

The protein resides in the endoplasmic reticulum membrane. In terms of biological role, ADIPOR-like receptor involved in zinc metabolism either by altering membrane sterol content or by directly altering cellular zinc levels. The chain is ADIPOR-like receptor IZH3 (IZH3) from Eremothecium gossypii (strain ATCC 10895 / CBS 109.51 / FGSC 9923 / NRRL Y-1056) (Yeast).